A 554-amino-acid polypeptide reads, in one-letter code: Hydroxylamine reductase (554 aa).

[2Fe-2S] cluster contacts are provided by Cys-3, Cys-6, Cys-18, and Cys-25. Hybrid [4Fe-2O-2S] cluster is bound by residues His-252, Glu-276, Cys-320, Cys-408, Cys-436, Cys-461, Glu-495, and Lys-497. The residue at position 408 (Cys-408) is a Cysteine persulfide.

This sequence belongs to the HCP family. It depends on [2Fe-2S] cluster as a cofactor. Requires hybrid [4Fe-2O-2S] cluster as cofactor.

Its subcellular location is the cytoplasm. The catalysed reaction is A + NH4(+) + H2O = hydroxylamine + AH2 + H(+). Its function is as follows. Catalyzes the reduction of hydroxylamine to form NH(3) and H(2)O. In Shewanella putrefaciens (strain CN-32 / ATCC BAA-453), this protein is Hydroxylamine reductase.